The primary structure comprises 485 residues: ATP synthase subunit beta, cyanelle (485 aa).

An ATP-binding site is contributed by 162–169; it reads GGAGVGKT.

The protein belongs to the ATPase alpha/beta chains family. F-type ATPases have 2 components, CF(1) - the catalytic core - and CF(0) - the membrane proton channel. CF(1) has five subunits: alpha(3), beta(3), gamma(1), delta(1), epsilon(1). CF(0) has four main subunits: a(1), b(1), b'(1) and c(9-12).

The protein localises to the plastid. The protein resides in the cyanelle thylakoid membrane. The catalysed reaction is ATP + H2O + 4 H(+)(in) = ADP + phosphate + 5 H(+)(out). Functionally, produces ATP from ADP in the presence of a proton gradient across the membrane. The catalytic sites are hosted primarily by the beta subunits. The protein is ATP synthase subunit beta, cyanelle of Cyanophora paradoxa.